A 188-amino-acid chain; its full sequence is Protein crossbronx-like (188 aa).

One can recognise a UBC core domain in the interval lysine 15–glycine 174.

This sequence belongs to the ubiquitin-conjugating enzyme family. FTS subfamily.

The sequence is that of Protein crossbronx-like from Drosophila simulans (Fruit fly).